Here is a 585-residue protein sequence, read N- to C-terminus: Butyrophilin subfamily 3 member A3 (585 aa).

A signal peptide spans 1–29 (MKMASSLACLLLNFHVSVFLVQLLTPCSA). Ig-like V-type domains follow at residues 30–139 (QFSV…KALV) and 145–236 (ALGS…ASIS). Over 30–248 (QFSVLGPSGP…DPFFTSAQPW (219 aa)) the chain is Extracellular. Disulfide bonds link Cys52–Cys126 and Cys166–Cys220. Asn115 carries N-linked (GlcNAc...) asparagine glycosylation. Residues 249-269 (IAALAGTLPISLLLLAGASYF) form a helical membrane-spanning segment. Topologically, residues 270–585 (LWRQQKEKIA…KPQACTEALY (316 aa)) are cytoplasmic. Positions 322–518 (RGEKSLAYHE…LTICPTPKEV (197 aa)) constitute a B30.2/SPRY domain. Residues 560-585 (AGAEGVSPSTTTSQNHKPQACTEALY) are disordered. Residues 566–576 (SPSTTTSQNHK) are compositionally biased toward polar residues.

This sequence belongs to the immunoglobulin superfamily. BTN/MOG family.

It localises to the membrane. The polypeptide is Butyrophilin subfamily 3 member A3 (BTN3A3) (Pongo abelii (Sumatran orangutan)).